The primary structure comprises 573 residues: Acetolactate synthase large subunit (573 aa).

Residue glutamate 51 participates in thiamine diphosphate binding. Residues arginine 153, 261–282 (HGTLEANTAMHESDLILGIGVR), and 304–323 (DIDPTSISKNVPVAIPIVGN) contribute to the FAD site. The thiamine pyrophosphate binding stretch occupies residues 396–476 (QHQMFAALHY…VVIICLNNHF (81 aa)). Positions 447 and 474 each coordinate Mg(2+).

Belongs to the TPP enzyme family. As to quaternary structure, dimer of large and small chains. The cofactor is Mg(2+). Thiamine diphosphate is required as a cofactor.

It catalyses the reaction 2 pyruvate + H(+) = (2S)-2-acetolactate + CO2. The protein operates within amino-acid biosynthesis; L-isoleucine biosynthesis; L-isoleucine from 2-oxobutanoate: step 1/4. It participates in amino-acid biosynthesis; L-valine biosynthesis; L-valine from pyruvate: step 1/4. In Haemophilus influenzae (strain ATCC 51907 / DSM 11121 / KW20 / Rd), this protein is Acetolactate synthase large subunit (ilvI).